Here is a 467-residue protein sequence, read N- to C-terminus: Keratin, type 1 cytoskeletal 11 (467 aa).

A head region spans residues 1 to 100 (MSYSSFSIAQ…GGTDFLLGTS (100 aa)). Low complexity predominate over residues 12–30 (SRVPSLSGTRSSSSYSLKS). Residues 12 to 32 (SRVPSLSGTRSSSSYSLKSDL) are disordered. Residues 101-137 (GKEAMQNLNDRLADYLARVRSLEDRNRELEQKIREWY) are coil 1A. The region spanning 101 to 413 (GKEAMQNLND…TLLEGDAGRS (313 aa)) is the IF rod domain. Residues 138–156 (EKQGAGTKRKDFSHYFKII) form a linker 1 region. Positions 157–248 (ADLQNQINAG…SHDEDMKALR (92 aa)) are coil 1B. The interval 249–268 (SQLGGQVNVEVDAAPAEDLT) is linker 12. A coil 2 region spans residues 269-416 (KKLEIIRQRY…EGDAGRSHSS (148 aa)). The interval 409–430 (DAGRSHSSSHLSSTVSKDKVPV) is disordered. Positions 417 to 463 (SHLSSTVSKDKVPVSSPNVITKVRTIVEEKINGQVISKKEYEGSPDQ) are tail.

It belongs to the intermediate filament family. As to quaternary structure, heterotetramer of two type I and two type II keratins. Expressed in the outermost cell layers of skin epidermis (at protein level).

The protein is Keratin, type 1 cytoskeletal 11 of Protopterus aethiopicus (Marbled lungfish).